The primary structure comprises 448 residues: N-succinylarginine dihydrolase (448 aa).

Substrate-binding positions include 19 to 28, N110, and 137 to 138; these read GGLSYGNVAS and HR. E174 is an active-site residue. R214 serves as a coordination point for substrate. Residue H250 is part of the active site. Substrate is bound by residues D252 and N365. C371 (nucleophile) is an active-site residue.

This sequence belongs to the succinylarginine dihydrolase family. Homodimer.

It catalyses the reaction N(2)-succinyl-L-arginine + 2 H2O + 2 H(+) = N(2)-succinyl-L-ornithine + 2 NH4(+) + CO2. Its pathway is amino-acid degradation; L-arginine degradation via AST pathway; L-glutamate and succinate from L-arginine: step 2/5. In terms of biological role, catalyzes the hydrolysis of N(2)-succinylarginine into N(2)-succinylornithine, ammonia and CO(2). This is N-succinylarginine dihydrolase from Pseudomonas syringae pv. syringae (strain B728a).